Consider the following 441-residue polypeptide: Ribulose bisphosphate carboxylase large chain (441 aa).

K5 bears the N6,N6,N6-trimethyllysine mark. Substrate is bound by residues N114 and T164. K166 (proton acceptor) is an active-site residue. Residue K168 coordinates substrate. Mg(2+) is bound by residues K192, D194, and E195. The residue at position 192 (K192) is an N6-carboxylysine. Catalysis depends on H285, which acts as the Proton acceptor. R286, H318, and S370 together coordinate substrate.

It belongs to the RuBisCO large chain family. Type I subfamily. In terms of assembly, heterohexadecamer of 8 large chains and 8 small chains; disulfide-linked. The disulfide link is formed within the large subunit homodimers. Requires Mg(2+) as cofactor. In terms of processing, the disulfide bond which can form in the large chain dimeric partners within the hexadecamer appears to be associated with oxidative stress and protein turnover.

It is found in the plastid. The protein localises to the chloroplast. It carries out the reaction 2 (2R)-3-phosphoglycerate + 2 H(+) = D-ribulose 1,5-bisphosphate + CO2 + H2O. It catalyses the reaction D-ribulose 1,5-bisphosphate + O2 = 2-phosphoglycolate + (2R)-3-phosphoglycerate + 2 H(+). Its function is as follows. RuBisCO catalyzes two reactions: the carboxylation of D-ribulose 1,5-bisphosphate, the primary event in carbon dioxide fixation, as well as the oxidative fragmentation of the pentose substrate in the photorespiration process. Both reactions occur simultaneously and in competition at the same active site. The polypeptide is Ribulose bisphosphate carboxylase large chain (Begonia metallica x Begonia sanguinea).